The following is a 58-amino-acid chain: UPF0337 protein OB2685 (58 aa).

Basic and acidic residues-rich tracts occupy residues 1 to 22 (MSDG…EAKD) and 30 to 46 (DPQR…KGEA). The segment at 1 to 58 (MSDGMKDKAKAIGKKIKGEAKDQWGSATDDPQRKAEGKRDKAKGEAQDTIADAKNNNK) is disordered.

Belongs to the UPF0337 (CsbD) family.

This chain is UPF0337 protein OB2685, found in Oceanobacillus iheyensis (strain DSM 14371 / CIP 107618 / JCM 11309 / KCTC 3954 / HTE831).